The sequence spans 154 residues: Endoribonuclease YbeY (154 aa).

His-114, His-118, and His-124 together coordinate Zn(2+).

It belongs to the endoribonuclease YbeY family. Zn(2+) is required as a cofactor.

It is found in the cytoplasm. Single strand-specific metallo-endoribonuclease involved in late-stage 70S ribosome quality control and in maturation of the 3' terminus of the 16S rRNA. This is Endoribonuclease YbeY from Haemophilus influenzae (strain 86-028NP).